The sequence spans 783 residues: Endonuclease MutS2 (783 aa).

Residue 328–335 participates in ATP binding; it reads GPNTGGKT. The Smr domain maps to 708–783; the sequence is LDLRGKRYEE…GSGCTIATLG (76 aa).

The protein belongs to the DNA mismatch repair MutS family. MutS2 subfamily. As to quaternary structure, homodimer. Binds to stalled ribosomes, contacting rRNA.

Its function is as follows. Endonuclease that is involved in the suppression of homologous recombination and thus may have a key role in the control of bacterial genetic diversity. In terms of biological role, acts as a ribosome collision sensor, splitting the ribosome into its 2 subunits. Detects stalled/collided 70S ribosomes which it binds and splits by an ATP-hydrolysis driven conformational change. Acts upstream of the ribosome quality control system (RQC), a ribosome-associated complex that mediates the extraction of incompletely synthesized nascent chains from stalled ribosomes and their subsequent degradation. Probably generates substrates for RQC. This chain is Endonuclease MutS2, found in Streptococcus thermophilus (strain CNRZ 1066).